Consider the following 153-residue polypeptide: Endoribonuclease YbeY (153 aa).

The Zn(2+) site is built by histidine 116, histidine 120, and histidine 126.

This sequence belongs to the endoribonuclease YbeY family. Zn(2+) serves as cofactor.

The protein resides in the cytoplasm. Functionally, single strand-specific metallo-endoribonuclease involved in late-stage 70S ribosome quality control and in maturation of the 3' terminus of the 16S rRNA. The polypeptide is Endoribonuclease YbeY (Clavibacter sepedonicus (Clavibacter michiganensis subsp. sepedonicus)).